The primary structure comprises 357 residues: Isopentenyl-diphosphate delta-isomerase (357 aa).

6 to 7 serves as a coordination point for substrate; the sequence is RK. Residues Ser-62, 63 to 65, Ser-93, and Asn-122 each bind FMN; that span reads AMT. 93–95 contacts substrate; it reads SQR. Gln-156 is a binding site for substrate. Glu-157 contributes to the Mg(2+) binding site. FMN is bound by residues Lys-186, Thr-216, 267–269, and 288–289; these read GVR and AL.

Belongs to the IPP isomerase type 2 family. In terms of assembly, homooctamer. Dimer of tetramers. FMN serves as cofactor. The cofactor is NADPH. Requires Mg(2+) as cofactor.

The protein localises to the cytoplasm. It catalyses the reaction isopentenyl diphosphate = dimethylallyl diphosphate. Functionally, involved in the biosynthesis of isoprenoids. Catalyzes the 1,3-allylic rearrangement of the homoallylic substrate isopentenyl (IPP) to its allylic isomer, dimethylallyl diphosphate (DMAPP). In Methanothrix thermoacetophila (strain DSM 6194 / JCM 14653 / NBRC 101360 / PT) (Methanosaeta thermophila), this protein is Isopentenyl-diphosphate delta-isomerase.